A 413-amino-acid polypeptide reads, in one-letter code: Acyltransferase mokF (413 aa).

R93 contacts monacolin J. The active-site Acyl-ester intermediate is the S96. Positions 193, 208, and 278 each coordinate monacolin J. G386 serves as a coordination point for 2-methylbutanoate.

The protein belongs to the class-A beta-lactamase family.

The catalysed reaction is monacolin J carboxylate + (S)-2-methylbutanoyl-[2-methylbutanoate polyketide synthase] = lovastatin carboxylate + holo-[2-methylbutanoate polyketide synthase]. Its pathway is polyketide biosynthesis; lovastatin biosynthesis. Acyltransferase; part of the gene cluster that mediates the biosynthesis of monakolin K, also known as lovastatin, and which acts as a potent competitive inhibitor of HMG-CoA reductase. Monakolin K biosynthesis is performed in two stages. The first stage is catalyzed by the nonaketide synthase mokA, which belongs to type I polyketide synthases and catalyzes the iterative nine-step formation of the polyketide. This PKS stage is completed by the action of dehydrogenase mokE, which catalyzes the NADPH-dependent reduction of the unsaturated tetra-, penta- and heptaketide intermediates that arise during the mokA-mediated biosynthesis of the nonaketide chain and leads to dihydromonacolin L. Covalently bound dihydromonacolin L is released from mokA by the mokD esterase. Conversion of dihydromonacolin L into monacolin L and then monacolin J is subsequently performed with the participation of molecular oxygen and P450 monoogygenase mokC. Finally, mokF performs the conversion of monacoline J to monacoline K through the addition of the side-chain diketide moiety (2R)-2-methylbutanoate produced by the diketide synthase mokB. The chain is Acyltransferase mokF from Monascus pilosus (Red mold).